A 187-amino-acid polypeptide reads, in one-letter code: HTH-type dhaKLM operon transcriptional activator DhaS (187 aa).

The region spanning Ile12–Leu72 is the HTH tetR-type domain. Residues Ser35–Phe54 constitute a DNA-binding region (H-T-H motif).

Homodimer. Interacts with a homodimer of DhaQ.

In terms of biological role, in complex with DhaQ, upon activation by dihydroxyacetone, activates transcription of the dhaKLM operon. Binds the inverted repeat sequence 5'-GGACACATN(6)ATTTGTCC-3' located upstream of and partially overlapping with the -35 promoter sequence of the dhaKLM operon promoter. This chain is HTH-type dhaKLM operon transcriptional activator DhaS (dhaS), found in Lactococcus lactis subsp. lactis (strain IL1403) (Streptococcus lactis).